Reading from the N-terminus, the 134-residue chain is Probable thionin-2.4 (134 aa).

Residues 1–24 form the signal peptide; the sequence is MEGKTLIVSVLIMSLFMAQNQVDA. 3 disulfides stabilise this stretch: Cys-27/Cys-64, Cys-28/Cys-56, and Cys-40/Cys-50. Residues 71 to 134 constitute a propeptide, acidic domain; that stretch reads DILENTGDAV…KGSMNAVENA (64 aa).

The protein belongs to the plant thionin (TC 1.C.44) family.

The protein localises to the secreted. Functionally, thionins are small plant proteins which are toxic to animal cells. They seem to exert their toxic effect at the level of the cell membrane. Their precise function is not known. In Arabidopsis thaliana (Mouse-ear cress), this protein is Probable thionin-2.4.